Consider the following 469-residue polypeptide: Glutamate--tRNA ligase (469 aa).

The short motif at 11-21 (PSPTGFIHLGN) is the 'HIGH' region element. The segment covering 118–131 (GEKPRYDGTWRPEP) has biased composition (basic and acidic residues). A disordered region spans residues 118–139 (GEKPRYDGTWRPEPGKVLPEPP). The short motif at 243 to 247 (KMSKR) is the 'KMSKS' region element. Lysine 246 is a binding site for ATP.

Belongs to the class-I aminoacyl-tRNA synthetase family. Glutamate--tRNA ligase type 1 subfamily. As to quaternary structure, monomer.

The protein resides in the cytoplasm. The enzyme catalyses tRNA(Glu) + L-glutamate + ATP = L-glutamyl-tRNA(Glu) + AMP + diphosphate. Its function is as follows. Catalyzes the attachment of glutamate to tRNA(Glu) in a two-step reaction: glutamate is first activated by ATP to form Glu-AMP and then transferred to the acceptor end of tRNA(Glu). The protein is Glutamate--tRNA ligase of Burkholderia mallei (strain NCTC 10247).